A 71-amino-acid chain; its full sequence is Small ribosomal subunit protein bS21 (71 aa).

The span at 48–59 (EKASLAKRHAKR) shows a compositional bias: basic residues. Residues 48–71 (EKASLAKRHAKRNFRENARNTRLY) are disordered. Residues 60 to 71 (NFRENARNTRLY) show a composition bias toward basic and acidic residues.

The protein belongs to the bacterial ribosomal protein bS21 family.

This Glaesserella parasuis serovar 5 (strain SH0165) (Haemophilus parasuis) protein is Small ribosomal subunit protein bS21.